Here is a 285-residue protein sequence, read N- to C-terminus: Probable endonuclease 4 (285 aa).

Positions 69, 109, 145, 179, 182, 216, 229, 231, and 261 each coordinate Zn(2+).

Belongs to the AP endonuclease 2 family. Requires Zn(2+) as cofactor.

It catalyses the reaction Endonucleolytic cleavage to 5'-phosphooligonucleotide end-products.. Its function is as follows. Endonuclease IV plays a role in DNA repair. It cleaves phosphodiester bonds at apurinic or apyrimidinic (AP) sites, generating a 3'-hydroxyl group and a 5'-terminal sugar phosphate. In Shigella flexneri serotype 5b (strain 8401), this protein is Probable endonuclease 4.